The sequence spans 291 residues: Methylsterol monooxygenase 1-3 (291 aa).

The next 3 helical transmembrane spans lie at 41–61, 92–112, and 114–134; these read TILV…IVEW, FLLV…MVGI, and SGLP…YFLI. Residues 128–263 form the Fatty acid hydroxylase domain; sequence LVVYFLIEDY…FTYCDYIYGT (136 aa). The Histidine box-1 signature appears at 143 to 147; that stretch reads HRWMH. The short motif at 156–160 is the Histidine box-2 element; it reads HRIHH. Residues 178 to 198 traverse the membrane as a helical segment; sequence ILILGIPTFLGPAIAPGHIMT. A Histidine box-3 motif is present at residues 235–241; it reads YHDYHHY.

The protein belongs to the sterol desaturase family. As to quaternary structure, interacts with ACBP1. The cofactor is Fe cation. Expressed at low levels in leaves, roots, siliques and flowers.

It localises to the endoplasmic reticulum membrane. It catalyses the reaction 4,4-dimethyl-5alpha-cholest-7-en-3beta-ol + 6 Fe(II)-[cytochrome b5] + 3 O2 + 5 H(+) = 4alpha-carboxy-4beta-methyl-5alpha-cholest-7-ene-3beta-ol + 6 Fe(III)-[cytochrome b5] + 4 H2O. The catalysed reaction is 24-methylidenelophenol + 6 Fe(II)-[cytochrome b5] + 3 O2 + 5 H(+) = 4alpha-carboxy-ergosta-7,24(24(1))-dien-3beta-ol + 6 Fe(III)-[cytochrome b5] + 4 H2O. Functionally, non-heme iron oxygenase involved in sterols biosynthesis by catalyzing the removal of the first methyl group at the C-4 position. 4,4-dimethyl-9-beta,19-cyclopropylsterols such as 24-methylenecycloartanol are the preferred substrates. This Arabidopsis thaliana (Mouse-ear cress) protein is Methylsterol monooxygenase 1-3.